The primary structure comprises 215 residues: UPF0323 lipoprotein HP_0232 (215 aa).

An N-terminal signal peptide occupies residues 1 to 27 (MKKPYRKISDYAIVGGLSALVMVSIVG). Cysteine 28 is lipidated: N-palmitoyl cysteine. The S-diacylglycerol cysteine moiety is linked to residue cysteine 28. Over residues 158–169 (QRTYKSPQAYQR) the composition is skewed to polar residues. Positions 158-215 (QRTYKSPQAYQRSQNSFSKSAPSASSMGGASKGQSGFFGSSRPTSSPAVSSGTRGFNS) are disordered. Residues 170–208 (SQNSFSKSAPSASSMGGASKGQSGFFGSSRPTSSPAVSS) show a composition bias toward low complexity.

This sequence belongs to the UPF0323 family.

The protein resides in the cell membrane. The protein is UPF0323 lipoprotein HP_0232 of Helicobacter pylori (strain ATCC 700392 / 26695) (Campylobacter pylori).